Here is a 436-residue protein sequence, read N- to C-terminus: 3-ketoacyl-CoA thiolase (436 aa).

Cys99 functions as the Acyl-thioester intermediate in the catalytic mechanism. Active-site proton acceptor residues include His392 and Cys422.

The protein belongs to the thiolase-like superfamily. Thiolase family. As to quaternary structure, heterotetramer of two alpha chains (FadJ) and two beta chains (FadI).

It is found in the cytoplasm. It carries out the reaction an acyl-CoA + acetyl-CoA = a 3-oxoacyl-CoA + CoA. It participates in lipid metabolism; fatty acid beta-oxidation. In terms of biological role, catalyzes the final step of fatty acid oxidation in which acetyl-CoA is released and the CoA ester of a fatty acid two carbons shorter is formed. This Salmonella schwarzengrund (strain CVM19633) protein is 3-ketoacyl-CoA thiolase.